A 178-amino-acid chain; its full sequence is MTQISAKDVPGMGRRQFMNLLTFGSVTGVALGALYPVVNYFIPPKASGAGGGTTAKDELGNDVTASGWLADHKEGDRSLVQGLKGDPTYLIVDGPDSIGDYGINAICTHLGCVVPWNAGANKFMCPCHGSQYDATGKVVRGPAPLSLALAHVNVENDNVFVSQWSETDFRTDEKPWWA.

Residues 20 to 42 (LLTFGSVTGVALGALYPVVNYFI) traverse the membrane as a helical segment. The 97-residue stretch at 65–161 (ASGWLADHKE…VNVENDNVFV (97 aa)) folds into the Rieske domain. [2Fe-2S] cluster-binding residues include cysteine 107, histidine 109, cysteine 125, and histidine 128. A disulfide bridge links cysteine 112 with cysteine 127.

This sequence belongs to the Rieske iron-sulfur protein family. In terms of assembly, the 4 large subunits of the cytochrome b6-f complex are cytochrome b6, subunit IV (17 kDa polypeptide, PetD), cytochrome f and the Rieske protein, while the 4 small subunits are PetG, PetL, PetM and PetN. The complex functions as a dimer. It depends on [2Fe-2S] cluster as a cofactor.

The protein localises to the cellular thylakoid membrane. The enzyme catalyses 2 oxidized [plastocyanin] + a plastoquinol + 2 H(+)(in) = 2 reduced [plastocyanin] + a plastoquinone + 4 H(+)(out). Functionally, component of the cytochrome b6-f complex, which mediates electron transfer between photosystem II (PSII) and photosystem I (PSI), cyclic electron flow around PSI, and state transitions. The protein is Cytochrome b6-f complex iron-sulfur subunit of Synechococcus sp. (strain RCC307).